Reading from the N-terminus, the 242-residue chain is Interleukin-34 (242 aa).

The N-terminal stretch at 1 to 20 (MPRGFTWLRYLGIFLGVALG) is a signal peptide. N-linked (GlcNAc...) asparagine glycosylation is present at N76. The interval 210 to 242 (TQLYPPPPWSPSSPPHSTGSVRPVRAQGEGLLP) is disordered. A compositionally biased stretch (pro residues) spans 213-223 (YPPPPWSPSSP).

This sequence belongs to the IL-34 family. In terms of assembly, homodimer. Interacts with CSF1R. Detected in the sinusoidal epithelium in the red pulp of spleen (at protein level). Predominantly expressed in spleen. Also detected in a range of other tissues including heart, brain, lung, liver, kidney, thymus, testis, ovary, small intestine, prostate and colon.

The protein localises to the secreted. Its function is as follows. Cytokine that promotes the proliferation, survival and differentiation of monocytes and macrophages. Promotes the release of pro-inflammatory chemokines, and thereby plays an important role in innate immunity and in inflammatory processes. Plays an important role in the regulation of osteoclast proliferation and differentiation, and in the regulation of bone resorption. Signaling via CSF1R and its downstream effectors stimulates phosphorylation of MAPK1/ERK2 AND MAPK3/ERK1. This Homo sapiens (Human) protein is Interleukin-34 (IL34).